We begin with the raw amino-acid sequence, 218 residues long: Monomethylamine corrinoid protein 1 (218 aa).

The 91-residue stretch at 1–91 (MANQEIFDKL…ELEKTKVEGE (91 aa)) folds into the B12-binding N-terminal domain. One can recognise a B12-binding domain in the interval 94–218 (TGLAITFVAE…AAKVALNIMK (125 aa)). His-107 contacts methylcob(III)alamin.

Belongs to the methylamine corrinoid protein family. As to quaternary structure, can form a complex with MtmB.

Its pathway is one-carbon metabolism; methanogenesis from methylamine. Acts as a methyl group carrier between MtmB and MtbA. The protein is Monomethylamine corrinoid protein 1 (mtmC1) of Methanosarcina acetivorans (strain ATCC 35395 / DSM 2834 / JCM 12185 / C2A).